A 485-amino-acid chain; its full sequence is NADH-quinone oxidoreductase subunit N (485 aa).

The next 14 membrane-spanning stretches (helical) occupy residues 8-28 (LIAL…MLSI), 35-55 (FLNA…LWFV), 71-91 (GFAM…CTFA), 105-125 (FYLL…ANHL), 127-147 (ALFL…GYAF), 159-179 (YTIL…LVYA), 203-223 (LLAG…LVPF), 235-255 (PAPV…GVVM), 271-291 (VVLG…ALSQ), 297-317 (LLGY…IALQ), 326-346 (VGVY…VVSL), 373-393 (AAVM…LGFI), 408-430 (WWLV…RVAV), and 455-475 (IVVL…QPLI).

The protein belongs to the complex I subunit 2 family. In terms of assembly, NDH-1 is composed of 13 different subunits. Subunits NuoA, H, J, K, L, M, N constitute the membrane sector of the complex.

It localises to the cell inner membrane. It catalyses the reaction a quinone + NADH + 5 H(+)(in) = a quinol + NAD(+) + 4 H(+)(out). Functionally, NDH-1 shuttles electrons from NADH, via FMN and iron-sulfur (Fe-S) centers, to quinones in the respiratory chain. The immediate electron acceptor for the enzyme in this species is believed to be ubiquinone. Couples the redox reaction to proton translocation (for every two electrons transferred, four hydrogen ions are translocated across the cytoplasmic membrane), and thus conserves the redox energy in a proton gradient. The chain is NADH-quinone oxidoreductase subunit N from Salmonella schwarzengrund (strain CVM19633).